The primary structure comprises 344 residues: L-rhamnose-proton symporter (344 aa).

Helical transmembrane passes span 4-24, 38-58, 68-88, 101-121, 137-157, 175-195, 214-234, 259-279, 290-310, and 323-343; these read AITM…CFYA, WSIG…ALLL, FNLS…IGNI, MGIG…TPII, TLLG…AGQL, LLLA…MNAA, LPSY…FCFV, ILLS…YAWG, ISWM…GLVL, and VLSL…MGMA.

The protein belongs to the L-rhamnose transporter (TC 2.A.7.6) family.

The protein resides in the cell inner membrane. It catalyses the reaction L-rhamnopyranose(in) + H(+)(in) = L-rhamnopyranose(out) + H(+)(out). Functionally, uptake of L-rhamnose across the cytoplasmic membrane with the concomitant transport of protons into the cell (symport system). The protein is L-rhamnose-proton symporter of Citrobacter koseri (strain ATCC BAA-895 / CDC 4225-83 / SGSC4696).